The chain runs to 229 residues: Cytidylate kinase (229 aa).

12 to 20 (GPSGAGKGT) contributes to the ATP binding site.

It belongs to the cytidylate kinase family. Type 1 subfamily.

The protein localises to the cytoplasm. The catalysed reaction is CMP + ATP = CDP + ADP. It catalyses the reaction dCMP + ATP = dCDP + ADP. In Serratia proteamaculans (strain 568), this protein is Cytidylate kinase.